The chain runs to 238 residues: Uridylate kinase (238 aa).

12–15 (KLSG) provides a ligand contact to ATP. Gly-54 is a UMP binding site. Gly-55 and Arg-59 together coordinate ATP. Residues Asp-74 and 135 to 142 (TGNPFFTT) contribute to the UMP site. ATP contacts are provided by Thr-162, Asn-163, Tyr-168, and Asp-171.

Belongs to the UMP kinase family. Homohexamer.

It is found in the cytoplasm. It carries out the reaction UMP + ATP = UDP + ADP. Its pathway is pyrimidine metabolism; CTP biosynthesis via de novo pathway; UDP from UMP (UMPK route): step 1/1. Inhibited by UTP. In terms of biological role, catalyzes the reversible phosphorylation of UMP to UDP. This Rhodopseudomonas palustris (strain HaA2) protein is Uridylate kinase.